A 394-amino-acid polypeptide reads, in one-letter code: L-lactate 2-monooxygenase (394 aa).

The 376-residue stretch at 19–394 folds into the FMN hydroxy acid dehydrogenase domain; it reads VAPTLPMSYA…LTIDALRPTR (376 aa). A 2-oxocarboxylate is bound at residue Y45. Residues 98–100, S129, and Q151 contribute to the FMN site; that span reads PIG. Residue Y153 coordinates a 2-oxocarboxylate. T179 lines the FMN pocket. A 2-oxocarboxylate is bound at residue R188. K267 is a binding site for FMN. H291 serves as the catalytic Proton acceptor. R294 is a binding site for a 2-oxocarboxylate. FMN-binding positions include 321-325 and R345; that span reads DSGIR.

Belongs to the FMN-dependent alpha-hydroxy acid dehydrogenase family. As to quaternary structure, homotetramer. FMN is required as a cofactor.

It catalyses the reaction (S)-lactate + O2 = acetate + CO2 + H2O. In terms of biological role, catalyzes the oxidative decarboxylation of (S)-lactate (L-lactate) to acetate and carbon dioxide. Its physiological role remains unknown. This chain is L-lactate 2-monooxygenase, found in Mycolicibacterium smegmatis (Mycobacterium smegmatis).